The primary structure comprises 313 residues: tRNA dimethylallyltransferase (313 aa).

Residue 17–24 coordinates ATP; the sequence is GPTASGKT. Residue 19 to 24 participates in substrate binding; the sequence is TASGKT. Interaction with substrate tRNA stretches follow at residues 42–45, 166–170, 247–252, and 280–287; these read DSAL, QRLSR, RCVGYR, and KRQITWLR.

It belongs to the IPP transferase family. As to quaternary structure, monomer. Requires Mg(2+) as cofactor.

The catalysed reaction is adenosine(37) in tRNA + dimethylallyl diphosphate = N(6)-dimethylallyladenosine(37) in tRNA + diphosphate. In terms of biological role, catalyzes the transfer of a dimethylallyl group onto the adenine at position 37 in tRNAs that read codons beginning with uridine, leading to the formation of N6-(dimethylallyl)adenosine (i(6)A). The protein is tRNA dimethylallyltransferase of Proteus mirabilis (strain HI4320).